Here is a 126-residue protein sequence, read N- to C-terminus: Holo-[acyl-carrier-protein] synthase (126 aa).

Residues Asp9 and Glu58 each contribute to the Mg(2+) site.

It belongs to the P-Pant transferase superfamily. AcpS family. It depends on Mg(2+) as a cofactor.

The protein localises to the cytoplasm. The catalysed reaction is apo-[ACP] + CoA = holo-[ACP] + adenosine 3',5'-bisphosphate + H(+). In terms of biological role, transfers the 4'-phosphopantetheine moiety from coenzyme A to a Ser of acyl-carrier-protein. This Shewanella denitrificans (strain OS217 / ATCC BAA-1090 / DSM 15013) protein is Holo-[acyl-carrier-protein] synthase.